A 487-amino-acid polypeptide reads, in one-letter code: Glutamate--tRNA ligase (487 aa).

The short motif at 13-23 (PSPTGLFHIGG) is the 'HIGH' region element. The short motif at 255 to 259 (KLSKR) is the 'KMSKS' region element. An ATP-binding site is contributed by K258.

This sequence belongs to the class-I aminoacyl-tRNA synthetase family. Glutamate--tRNA ligase type 1 subfamily. Monomer.

Its subcellular location is the cytoplasm. It carries out the reaction tRNA(Glu) + L-glutamate + ATP = L-glutamyl-tRNA(Glu) + AMP + diphosphate. In terms of biological role, catalyzes the attachment of glutamate to tRNA(Glu) in a two-step reaction: glutamate is first activated by ATP to form Glu-AMP and then transferred to the acceptor end of tRNA(Glu). The polypeptide is Glutamate--tRNA ligase (Malacoplasma penetrans (strain HF-2) (Mycoplasma penetrans)).